Consider the following 646-residue polypeptide: Protein kinase YegI (646 aa).

Residues 13–300 (VTPGRELGKG…KAWVAALDLL (288 aa)) enclose the Protein kinase domain. Residues 19–27 (LGKGGEGAV) and Lys39 contribute to the ATP site. The active-site Proton acceptor is Asp141.

In terms of processing, autophosphorylated.

Its function is as follows. Probable serine/threonine kinase. The sequence is that of Protein kinase YegI (yegI) from Escherichia coli O157:H7.